We begin with the raw amino-acid sequence, 216 residues long: Neural cell adhesion molecule L1.2 (216 aa).

Positions 1–64 (EFFIHYLRKD…QTAGARVMEV (64 aa)) constitute a Fibronectin type-III domain. The Extracellular portion of the chain corresponds to 1 to 73 (EFFIHYLRKD…VKSGFVTESW (73 aa)). N-linked (GlcNAc...) asparagine glycans are attached at residues Asn-22 and Asn-46. The chain crosses the membrane as a helical span at residues 74–94 (FIGLISALVLLLLVLLILCFI). Over 95–216 (KRSKGGKYSV…GLPNSAALLD (122 aa)) the chain is Cytoplasmic. Disordered regions lie at residues 127 to 149 (YRSL…CEDS) and 173 to 216 (DESL…ALLD). Positions 128–139 (RSLESDNEEKRT) are enriched in basic and acidic residues.

This sequence belongs to the immunoglobulin superfamily. L1/neurofascin/NgCAM family. Expressed in many postmitotic neurons in 16-36 hours embryos. Little or no expression in the olfactory placode, the anterior lateral line/acoustic ganglia complex, the posterior lateral line ganglion, late-developing hindbrain neurons and some Rohon-Beard cells in the spinal cord.

The protein localises to the cell membrane. The protein resides in the cell projection. Its subcellular location is the growth cone. In terms of biological role, cell adhesion molecule with an important role in the development of the nervous system. Involved in neuron-neuron adhesion, neurite fasciculation, outgrowth of neurites, etc. Binds to axonin on neurons. The protein is Neural cell adhesion molecule L1.2 (nadl1.2) of Danio rerio (Zebrafish).